The primary structure comprises 396 residues: NAD(P)H oxidoreductase RTN4IP1, mitochondrial (396 aa).

The transit peptide at 1 to 40 (MGVLKTCVLRRSACAAACFWRRTVIPKPPFRGISTTSARS) directs the protein to the mitochondrion. The region spanning 52–393 (GKNEVLRFTQ…RGHARGKTVV (342 aa)) is the Enoyl reductase (ER) domain. Residues Ser-214, Gly-216, Val-217, Ser-237, Tyr-255, Asn-276, Leu-300, Ala-341, Phe-343, His-386, Ala-387, and Arg-388 each contribute to the NADPH site.

It belongs to the zinc-containing alcohol dehydrogenase family. Quinone oxidoreductase subfamily. Interacts with RTN4, UQCRC1 and UQCRC2. As to expression, widely expressed in mitochondria-enriched tissues. Found in heart, kidney, liver, brain and spinal cord.

It is found in the mitochondrion matrix. It localises to the mitochondrion outer membrane. It catalyses the reaction a 3-demethylubiquinone + NADH + 2 H(+) = a 3-demethylubiquinol + NAD(+). The enzyme catalyses a 3-demethylubiquinone + NADPH + 2 H(+) = a 3-demethylubiquinol + NADP(+). It carries out the reaction 3-demethylubiquinone-10 + NADH + 2 H(+) = 3-demethylubiquinol-10 + NAD(+). The catalysed reaction is 3-demethylubiquinone-10 + NADPH + 2 H(+) = 3-demethylubiquinol-10 + NADP(+). The protein operates within cofactor biosynthesis; ubiquinone biosynthesis. In terms of biological role, NAD(P)H oxidoreductase involved in the ubiquinone biosynthetic pathway. Required for the O-methyltransferase activity of COQ3. Able to catalyze the oxidoreduction of 3-demethylubiquinone into 3-demethylubiquinol in vitro. However, it is unclear if 3-demethylubiquinone constitutes a substrate in vivo. May also play a role in the regulation of retinal ganglion cell (RGC) neurite outgrowth, and hence in the development of the inner retina and optic nerve. Appears to be a potent inhibitor of regeneration following spinal cord injury. The protein is NAD(P)H oxidoreductase RTN4IP1, mitochondrial of Mus musculus (Mouse).